Reading from the N-terminus, the 385-residue chain is Lipid-A-disaccharide synthase (385 aa).

Belongs to the LpxB family.

The catalysed reaction is a lipid X + a UDP-2-N,3-O-bis[(3R)-3-hydroxyacyl]-alpha-D-glucosamine = a lipid A disaccharide + UDP + H(+). It participates in bacterial outer membrane biogenesis; LPS lipid A biosynthesis. In terms of biological role, condensation of UDP-2,3-diacylglucosamine and 2,3-diacylglucosamine-1-phosphate to form lipid A disaccharide, a precursor of lipid A, a phosphorylated glycolipid that anchors the lipopolysaccharide to the outer membrane of the cell. This chain is Lipid-A-disaccharide synthase, found in Xylella fastidiosa (strain M12).